Reading from the N-terminus, the 380-residue chain is Queuine tRNA-ribosyltransferase (380 aa).

D93 (proton acceptor) is an active-site residue. Substrate is bound by residues 93-97 (DSGGF), D147, Q198, and G225. An RNA binding region spans residues 256-262 (GVGLPSN). The active-site Nucleophile is D275. An RNA binding; important for wobble base 34 recognition region spans residues 280-284 (ARNGR). Residues C313, C315, C318, and H344 each coordinate Zn(2+).

It belongs to the queuine tRNA-ribosyltransferase family. In terms of assembly, homodimer. Within each dimer, one monomer is responsible for RNA recognition and catalysis, while the other monomer binds to the replacement base PreQ1. Zn(2+) is required as a cofactor.

It catalyses the reaction 7-aminomethyl-7-carbaguanine + guanosine(34) in tRNA = 7-aminomethyl-7-carbaguanosine(34) in tRNA + guanine. It participates in tRNA modification; tRNA-queuosine biosynthesis. In terms of biological role, catalyzes the base-exchange of a guanine (G) residue with the queuine precursor 7-aminomethyl-7-deazaguanine (PreQ1) at position 34 (anticodon wobble position) in tRNAs with GU(N) anticodons (tRNA-Asp, -Asn, -His and -Tyr). Catalysis occurs through a double-displacement mechanism. The nucleophile active site attacks the C1' of nucleotide 34 to detach the guanine base from the RNA, forming a covalent enzyme-RNA intermediate. The proton acceptor active site deprotonates the incoming PreQ1, allowing a nucleophilic attack on the C1' of the ribose to form the product. After dissociation, two additional enzymatic reactions on the tRNA convert PreQ1 to queuine (Q), resulting in the hypermodified nucleoside queuosine (7-(((4,5-cis-dihydroxy-2-cyclopenten-1-yl)amino)methyl)-7-deazaguanosine). The protein is Queuine tRNA-ribosyltransferase of Clostridium perfringens (strain 13 / Type A).